The chain runs to 257 residues: Imidazole glycerol phosphate synthase subunit HisF (257 aa).

Residues aspartate 11 and aspartate 130 contribute to the active site.

This sequence belongs to the HisA/HisF family. In terms of assembly, heterodimer of HisH and HisF.

It localises to the cytoplasm. It carries out the reaction 5-[(5-phospho-1-deoxy-D-ribulos-1-ylimino)methylamino]-1-(5-phospho-beta-D-ribosyl)imidazole-4-carboxamide + L-glutamine = D-erythro-1-(imidazol-4-yl)glycerol 3-phosphate + 5-amino-1-(5-phospho-beta-D-ribosyl)imidazole-4-carboxamide + L-glutamate + H(+). It participates in amino-acid biosynthesis; L-histidine biosynthesis; L-histidine from 5-phospho-alpha-D-ribose 1-diphosphate: step 5/9. Its function is as follows. IGPS catalyzes the conversion of PRFAR and glutamine to IGP, AICAR and glutamate. The HisF subunit catalyzes the cyclization activity that produces IGP and AICAR from PRFAR using the ammonia provided by the HisH subunit. This chain is Imidazole glycerol phosphate synthase subunit HisF, found in Actinobacillus succinogenes (strain ATCC 55618 / DSM 22257 / CCUG 43843 / 130Z).